Reading from the N-terminus, the 23-residue chain is Protein DCL, chloroplastic (23 aa).

It is found in the plastid. The protein resides in the chloroplast. Functionally, has a function in the early stage of chloroplast development and palisade cell morphogenesis. The sequence is that of Protein DCL, chloroplastic from Pseudotsuga menziesii (Douglas-fir).